The sequence spans 129 residues: Regulator of ribonuclease activity B (129 aa).

The protein belongs to the RraB family. In terms of assembly, interacts with the C-terminal region of Rne.

The protein resides in the cytoplasm. In terms of biological role, globally modulates RNA abundance by binding to RNase E (Rne) and regulating its endonucleolytic activity. Can modulate Rne action in a substrate-dependent manner by altering the composition of the degradosome. The protein is Regulator of ribonuclease activity B of Shewanella denitrificans (strain OS217 / ATCC BAA-1090 / DSM 15013).